A 246-amino-acid polypeptide reads, in one-letter code: Putative protein phosphatase 2C-type (246 aa).

The PPM-type phosphatase domain maps to 2 to 240; the sequence is KISLKTDIGQ…DNITIALVHN (239 aa). Mn(2+) is bound by residues Asp36, Gly37, Asp192, and Asp231.

Mg(2+) is required as a cofactor. It depends on Mn(2+) as a cofactor.

The catalysed reaction is O-phospho-L-seryl-[protein] + H2O = L-seryl-[protein] + phosphate. The enzyme catalyses O-phospho-L-threonyl-[protein] + H2O = L-threonyl-[protein] + phosphate. This is Putative protein phosphatase 2C-type from Streptococcus pyogenes serotype M6 (strain ATCC BAA-946 / MGAS10394).